We begin with the raw amino-acid sequence, 728 residues long: Procollagen-lysine,2-oxoglutarate 5-dioxygenase 1 (728 aa).

The signal sequence occupies residues 1-18 (MRSLLLLAPLAWLLLVQA). N-linked (GlcNAc...) asparagine glycans are attached at residues Asn198 and Asn539. In terms of domain architecture, Fe2OG dioxygenase spans 637-728 (QFDLAFVVRY…RYIAVSFVDP (92 aa)). Fe cation-binding residues include His657 and Asp659. An N-linked (GlcNAc...) asparagine glycan is attached at Asn687. Fe cation is bound at residue His709. The active site involves Arg719.

As to quaternary structure, homodimer. Identified in a complex with P3H3 and P3H4. Fe(2+) is required as a cofactor. The cofactor is L-ascorbate. Highly expressed in the liver, heart, lung, skeletal muscle and kidney.

It localises to the rough endoplasmic reticulum membrane. It carries out the reaction L-lysyl-[collagen] + 2-oxoglutarate + O2 = (5R)-5-hydroxy-L-lysyl-[collagen] + succinate + CO2. Its function is as follows. Part of a complex composed of PLOD1, P3H3 and P3H4 that catalyzes hydroxylation of lysine residues in collagen alpha chains and is required for normal assembly and cross-linkling of collagen fibrils. Forms hydroxylysine residues in -Xaa-Lys-Gly- sequences in collagens. These hydroxylysines serve as sites of attachment for carbohydrate units and are essential for the stability of the intermolecular collagen cross-links. The polypeptide is Procollagen-lysine,2-oxoglutarate 5-dioxygenase 1 (Plod1) (Mus musculus (Mouse)).